The primary structure comprises 227 residues: Protein FAM3C (227 aa).

The N-terminal stretch at 1-24 (MRVAGAAKLVVAVAVFLLTFYVIS) is a signal peptide. 2 disulfides stabilise this stretch: Cys-58–Cys-86 and Cys-64–Cys-221. Residues 67-225 (KHFAFKMASG…VEMEGCIPQK (159 aa)) form the GG-type lectin domain.

It belongs to the FAM3 family. As to expression, present in most secretory epithelia (at protein level).

The protein localises to the secreted. The protein resides in the cytoplasmic vesicle. May be involved in retinal laminar formation. Promotes epithelial to mesenchymal transition. In Homo sapiens (Human), this protein is Protein FAM3C (FAM3C).